Reading from the N-terminus, the 1407-residue chain is E3 ubiquitin-protein ligase linker protein MMS1 (1407 aa).

The tract at residues 1-600 (MLGLRTHGLD…QFQIFRHLRI (600 aa)) is required for interaction with MMS22. Position 1294 is a phosphothreonine (Thr-1294).

In terms of assembly, component of multiple cullin-RING ligases (CRLs) composed of 4 subunits: the RING protein HRT1, the cullin RTT101, a linker protein MMS1, and one of many alternative substrate receptors belonging to a protein family described as DCAF (DDB1- and CUL4-associated factor). Component of a RTT101(MMS1-MMS22) complex with the substrate receptor MMS22. This complex further interacts with RTT107 and CTF4 to form RTT101-MMS1-MMS22-RTT107 and RTT101-MMS1-MMS22-CTF4 complexes respectively. Component of a RTT101(MSS1-CRT10) complex with the substrate receptor CRT10. Component of a RTT101(MSS1-ESC2) complex with the potential substrate receptor ESC2. Component of a RTT101(MSS1-ORC5) complex with the potential substrate receptor ORC5. Interacts with RTT101 (via N-ter). Interacts (via N-ter) with MMS22 (via C-ter). Interacts with CRT10.

The protein localises to the nucleus. In terms of biological role, component of multiple cullin-RING-based E3 ubiquitin-protein ligase complexes (CRLs), which mediate the ubiquitination of target proteins. The CRL associates with CDC34 as the E2 ubiquitin-conjugating enzyme. The functional specificity of the CRL depends on the type of the associated substrate receptor protein. RTT101(MMS1-MMS22) promotes fork progression through damaged DNA or natural pause sites by stabilizing replication proteins like the replication fork-pausing complex (FPC) and leading-strand polymerase at stalled replication forks. RTT101(MMS1-MMS22) ubiquitinates the acetylated histones H3K56ac-H4 at lysine residues H3K121, H3K122 and H3K125. Ubiquitination is required for efficient histone deposition during replication-coupled nucleosome assembly, probably by facilitating the transfer of H3-H4 from ASF1 to other chaperones involved in histone deposition. RTT101(MMS1-CRT10) may regulate nucleotide synthesis through transcriptional regulation of ribonucleotide reductase. RTT101(MMS1) is also involved in the non-functional rRNA decay (NRD) of 25S rRNA through the selective, ubiquitination-dependent degradation of nonfunctional ribosomal particles. Involved in the regulation of TY1 transposition. This chain is E3 ubiquitin-protein ligase linker protein MMS1 (MMS1), found in Saccharomyces cerevisiae (strain ATCC 204508 / S288c) (Baker's yeast).